The sequence spans 301 residues: Pseudouridine-5'-phosphate glycosidase (301 aa).

E25 serves as the catalytic Proton donor. Positions 86 and 106 each coordinate substrate. D138 contributes to the Mn(2+) binding site. 140 to 142 (SAD) is a substrate binding site. The Nucleophile role is filled by K159.

This sequence belongs to the pseudouridine-5'-phosphate glycosidase family. In terms of assembly, homotrimer. The cofactor is Mn(2+).

It catalyses the reaction D-ribose 5-phosphate + uracil = psi-UMP + H2O. Functionally, catalyzes the reversible cleavage of pseudouridine 5'-phosphate (PsiMP) to ribose 5-phosphate and uracil. Functions biologically in the cleavage direction, as part of a pseudouridine degradation pathway. In Geobacillus kaustophilus (strain HTA426), this protein is Pseudouridine-5'-phosphate glycosidase.